Reading from the N-terminus, the 274-residue chain is Putative homeobox protein Meis3-like 1 (274 aa).

The 54-residue stretch at 12-65 (GGDVCSSDSFNEDNTAFAKQVRSERPFFSSNPELDNLMIQAIQVLRFHLLELEK) folds into the MEIS N-terminal domain. 2 disordered regions span residues 108-167 (DSGS…KRGI) and 228-248 (NRTG…GYTE). Polar residues predominate over residues 123–135 (GLASQSGDNSSDQ). A DNA-binding region (homeobox) is located at residues 161 to 223 (RNKKRGIFPK…NARRRIVQPM (63 aa)).

It belongs to the TALE/MEIS homeobox family.

The protein localises to the nucleus. In Homo sapiens (Human), this protein is Putative homeobox protein Meis3-like 1 (MEIS3P1).